A 532-amino-acid polypeptide reads, in one-letter code: 2,3-bisphosphoglycerate-independent phosphoglycerate mutase (532 aa).

Residues Asp15 and Ser65 each contribute to the Mn(2+) site. The active-site Phosphoserine intermediate is the Ser65. Residues His126, 156–157 (RD), Arg188, Arg194, 258–261 (RPDR), and Lys331 each bind substrate. Mn(2+) contacts are provided by Asp398, His402, Asp439, His440, and His457.

Belongs to the BPG-independent phosphoglycerate mutase family. As to quaternary structure, monomer. Mn(2+) is required as a cofactor.

It carries out the reaction (2R)-2-phosphoglycerate = (2R)-3-phosphoglycerate. It functions in the pathway carbohydrate degradation; glycolysis; pyruvate from D-glyceraldehyde 3-phosphate: step 3/5. Functionally, catalyzes the interconversion of 2-phosphoglycerate and 3-phosphoglycerate. This Trichodesmium erythraeum (strain IMS101) protein is 2,3-bisphosphoglycerate-independent phosphoglycerate mutase.